A 280-amino-acid chain; its full sequence is 3-methyl-2-oxobutanoate hydroxymethyltransferase (280 aa).

D60 and D99 together coordinate Mg(2+). 3-methyl-2-oxobutanoate-binding positions include D60–S61, D99, and K129. E131 is a Mg(2+) binding site. E198 functions as the Proton acceptor in the catalytic mechanism.

It belongs to the PanB family. In terms of assembly, homodecamer; pentamer of dimers. Mg(2+) is required as a cofactor.

The protein resides in the cytoplasm. It carries out the reaction 3-methyl-2-oxobutanoate + (6R)-5,10-methylene-5,6,7,8-tetrahydrofolate + H2O = 2-dehydropantoate + (6S)-5,6,7,8-tetrahydrofolate. The protein operates within cofactor biosynthesis; (R)-pantothenate biosynthesis; (R)-pantoate from 3-methyl-2-oxobutanoate: step 1/2. Catalyzes the reversible reaction in which hydroxymethyl group from 5,10-methylenetetrahydrofolate is transferred onto alpha-ketoisovalerate to form ketopantoate. This chain is 3-methyl-2-oxobutanoate hydroxymethyltransferase, found in Thermobifida fusca (strain YX).